Reading from the N-terminus, the 170-residue chain is MKSKIVGVIAIVLVFALDQVSKAYAIDWYSQSGATEIFKFCSLVEVWNRGISFGMFGALESSNLIFTYVSLGVILMLFVLFVQSKCNKSTICMGVVIGGALGNLADRLRFGAVYDFISLHAGEFHWPAFNFADVCVTCGVICFLCLEVMYHAKACVDTSGDPDALSVKKY.

The next 3 helical transmembrane spans lie at 5–25 (IVGV…KAYA), 62–82 (SNLI…VLFV), and 89–111 (STIC…LRFG). Catalysis depends on residues aspartate 115 and aspartate 133. Residues 126 to 146 (WPAFNFADVCVTCGVICFLCL) traverse the membrane as a helical segment.

The protein belongs to the peptidase A8 family.

It is found in the cell inner membrane. The catalysed reaction is Release of signal peptides from bacterial membrane prolipoproteins. Hydrolyzes -Xaa-Yaa-Zaa-|-(S,diacylglyceryl)Cys-, in which Xaa is hydrophobic (preferably Leu), and Yaa (Ala or Ser) and Zaa (Gly or Ala) have small, neutral side chains.. Its pathway is protein modification; lipoprotein biosynthesis (signal peptide cleavage). In terms of biological role, this protein specifically catalyzes the removal of signal peptides from prolipoproteins. The sequence is that of Lipoprotein signal peptidase from Anaplasma marginale (strain Florida).